A 419-amino-acid chain; its full sequence is Phosphoglycerate kinase (419 aa).

Substrate contacts are provided by residues 42 to 44 (DLN), Arg-58, 81 to 84 (HLGR), Arg-135, and Arg-168. ATP contacts are provided by residues Lys-219, Glu-341, and 367–370 (GGDT).

Belongs to the phosphoglycerate kinase family. Monomer.

The protein resides in the cytoplasm. It carries out the reaction (2R)-3-phosphoglycerate + ATP = (2R)-3-phospho-glyceroyl phosphate + ADP. It functions in the pathway carbohydrate degradation; glycolysis; pyruvate from D-glyceraldehyde 3-phosphate: step 2/5. This chain is Phosphoglycerate kinase, found in Ralstonia nicotianae (strain ATCC BAA-1114 / GMI1000) (Ralstonia solanacearum).